Here is a 530-residue protein sequence, read N- to C-terminus: Inactive ubiquitin carboxyl-terminal hydrolase 17-like protein 4 (530 aa).

Residues 80-375 (AGLQNMGNTC…QAYVLFYIQK (296 aa)) enclose the USP domain. Over residues 382–392 (SESVSRGREPR) the composition is skewed to basic and acidic residues. Disordered stretches follow at residues 382–410 (SESVSRGREPRALGAEDTDRPATQGELKR) and 493–530 (NSTDQESMNTGTLASLQGRTRRSKGKNKHSKRSLLVCQ). Positions 495-510 (TDQESMNTGTLASLQG) are enriched in polar residues. The span at 511–524 (RTRRSKGKNKHSKR) shows a compositional bias: basic residues.

Belongs to the peptidase C19 family. USP17 subfamily.

Its subcellular location is the nucleus. The protein localises to the endoplasmic reticulum. The protein is Inactive ubiquitin carboxyl-terminal hydrolase 17-like protein 4 (USP17L4) of Homo sapiens (Human).